Consider the following 136-residue polypeptide: Small ribosomal subunit protein eS17B (136 aa).

Belongs to the eukaryotic ribosomal protein eS17 family. In terms of assembly, component of the small ribosomal subunit (SSU). Mature yeast ribosomes consist of a small (40S) and a large (60S) subunit. The 40S small subunit contains 1 molecule of ribosomal RNA (18S rRNA) and 33 different proteins (encoded by 57 genes). The large 60S subunit contains 3 rRNA molecules (25S, 5.8S and 5S rRNA) and 46 different proteins (encoded by 81 genes).

Its subcellular location is the cytoplasm. Component of the ribosome, a large ribonucleoprotein complex responsible for the synthesis of proteins in the cell. The small ribosomal subunit (SSU) binds messenger RNAs (mRNAs) and translates the encoded message by selecting cognate aminoacyl-transfer RNA (tRNA) molecules. The large subunit (LSU) contains the ribosomal catalytic site termed the peptidyl transferase center (PTC), which catalyzes the formation of peptide bonds, thereby polymerizing the amino acids delivered by tRNAs into a polypeptide chain. The nascent polypeptides leave the ribosome through a tunnel in the LSU and interact with protein factors that function in enzymatic processing, targeting, and the membrane insertion of nascent chains at the exit of the ribosomal tunnel. The polypeptide is Small ribosomal subunit protein eS17B (Saccharomyces cerevisiae (strain ATCC 204508 / S288c) (Baker's yeast)).